The primary structure comprises 252 residues: Trans-aconitate 2-methyltransferase (252 aa).

The protein belongs to the methyltransferase superfamily. Tam family.

Its subcellular location is the cytoplasm. The enzyme catalyses trans-aconitate + S-adenosyl-L-methionine = (E)-3-(methoxycarbonyl)pent-2-enedioate + S-adenosyl-L-homocysteine. In terms of biological role, catalyzes the S-adenosylmethionine monomethyl esterification of trans-aconitate. The chain is Trans-aconitate 2-methyltransferase from Escherichia coli O1:K1 / APEC.